Here is a 619-residue protein sequence, read N- to C-terminus: MITNKSKYYFFLILIFINFYLINCQEEYPIDQTGKCEPYIGDSQITKCSTFLPNINSIYVSANSTQKDSMKTLDNYFGLLLAVGSEKCKDSSLTYQTLCSMYLKECESFTDNSTLKTVSIPKRICRKTCNDVTKLCNIESLFNCSQNEPINNLPLCPLNYSIYDLSLVNGDSNYELQCYSPLSNDSIEIPVTNYCPFPLIYINSTDHSADEDRGYMFVSGNSNCVVPNPVPLYTPKQWDRLYDLSNSLSVLSCVGTLFLLFTFNILNKKINRFDRMNSLFNGSVFMMSLSGVIILFAGGPRALIKDGGARISVWQDPLCSATGFIFQLFSIAAILFWVVMSFELWYKIKFMTKKLDLKKYYIPFIIIVSLVFSIIPLATKNYRMIRGNMHCWVHTTKLQNSLFWIPLGIAITIGTIFIGLVMFEIHRIVSANSKGGVLKLEIKSILNVALIYLTFIYLFAFNFYMNGQEGVVYGQIESFYQCTLENDASECTIQGPSIGSLGFFIFCIRIYGVYCFILQGLNYRAYNIWKESIFFNNRFVSYIKNNILNIETSSTGSGGTSTTASATTTTTTKKHNGIDSLNIDSAFSKNNESDDEDDYDPYKKSKNNITLKDIEVSKS.

The signal sequence occupies residues 1-24 (MITNKSKYYFFLILIFINFYLINC). Asn4, Asn63, Asn112, Asn143, Asn159, Asn184, and Asn203 each carry an N-linked (GlcNAc...) asparagine glycan. The Extracellular portion of the chain corresponds to 25 to 245 (QEEYPIDQTG…KQWDRLYDLS (221 aa)). The 139-residue stretch at 31 to 169 (DQTGKCEPYI…YSIYDLSLVN (139 aa)) folds into the FZ domain. 2 cysteine pairs are disulfide-bonded: Cys36–Cys106 and Cys48–Cys99. A helical transmembrane segment spans residues 246 to 266 (NSLSVLSCVGTLFLLFTFNIL). Topologically, residues 267–278 (NKKINRFDRMNS) are cytoplasmic. Residues 279 to 299 (LFNGSVFMMSLSGVIILFAGG) traverse the membrane as a helical segment. The Extracellular segment spans residues 300–321 (PRALIKDGGARISVWQDPLCSA). A helical membrane pass occupies residues 322–342 (TGFIFQLFSIAAILFWVVMSF). At 343-358 (ELWYKIKFMTKKLDLK) the chain is on the cytoplasmic side. A helical transmembrane segment spans residues 359 to 379 (KYYIPFIIIVSLVFSIIPLAT). Residues 380 to 402 (KNYRMIRGNMHCWVHTTKLQNSL) are Extracellular-facing. The helical transmembrane segment at 403-423 (FWIPLGIAITIGTIFIGLVMF) threads the bilayer. At 424-444 (EIHRIVSANSKGGVLKLEIKS) the chain is on the cytoplasmic side. Residues 445–465 (ILNVALIYLTFIYLFAFNFYM) traverse the membrane as a helical segment. The Extracellular portion of the chain corresponds to 466–497 (NGQEGVVYGQIESFYQCTLENDASECTIQGPS). A helical transmembrane segment spans residues 498–518 (IGSLGFFIFCIRIYGVYCFIL). Over 519 to 619 (QGLNYRAYNI…TLKDIEVSKS (101 aa)) the chain is Cytoplasmic. The disordered stretch occupies residues 581 to 605 (LNIDSAFSKNNESDDEDDYDPYKKS).

The protein belongs to the G-protein coupled receptor Fz/Smo family.

The protein localises to the membrane. This is Frizzled and smoothened-like protein L (fslL) from Dictyostelium discoideum (Social amoeba).